The sequence spans 880 residues: Alanine--tRNA ligase (880 aa).

The Zn(2+) site is built by H565, H569, C675, and H679.

Belongs to the class-II aminoacyl-tRNA synthetase family. The cofactor is Zn(2+).

The protein resides in the cytoplasm. The enzyme catalyses tRNA(Ala) + L-alanine + ATP = L-alanyl-tRNA(Ala) + AMP + diphosphate. In terms of biological role, catalyzes the attachment of alanine to tRNA(Ala) in a two-step reaction: alanine is first activated by ATP to form Ala-AMP and then transferred to the acceptor end of tRNA(Ala). Also edits incorrectly charged Ser-tRNA(Ala) and Gly-tRNA(Ala) via its editing domain. In Granulibacter bethesdensis (strain ATCC BAA-1260 / CGDNIH1), this protein is Alanine--tRNA ligase.